A 132-amino-acid chain; its full sequence is Small ribosomal subunit protein uS8 (132 aa).

It belongs to the universal ribosomal protein uS8 family. As to quaternary structure, part of the 30S ribosomal subunit. Contacts proteins S5 and S12.

Its function is as follows. One of the primary rRNA binding proteins, it binds directly to 16S rRNA central domain where it helps coordinate assembly of the platform of the 30S subunit. The chain is Small ribosomal subunit protein uS8 from Clostridium beijerinckii (strain ATCC 51743 / NCIMB 8052) (Clostridium acetobutylicum).